A 249-amino-acid polypeptide reads, in one-letter code: DNA repair protein RecO (249 aa).

The protein belongs to the RecO family.

Involved in DNA repair and RecF pathway recombination. The polypeptide is DNA repair protein RecO (Mycoplasma mycoides subsp. mycoides SC (strain CCUG 32753 / NCTC 10114 / PG1)).